The following is a 437-amino-acid chain: MATSNERKPAIFLLSLGCSKNTVDSERLTAQAVASGLTFTDDVDEASIILINTCGFIEDAKKESIDEMLAAIGKKEEGIVREVYVMGCLVELYRKELSEEMPEVDGWFGTRQLPDVLAAIGAHYCEELYDRRELLTPPHYAFLKISEGCNRRCSFCSIPKIRGPYVSQPIEQLLREAALLQEQGVRELNLIAQDISVYGYDLYGKPALNDLTLRLSDMGFDWIRLLYAYPLNFPLEVIDTMRQRRNVCNYLDMPLQHINDRILKSMQRGIGRKGTEELIDAIRQKNPDIRLRTTMIAGYPSETREEFDELLDFVRQARFDRLGCFPYRHEEHAPAYALEDTISDKEKEERVGELMELQESIAASLNRKLEGQTLTVLIDRIEDNVAYGRTEYDAPEVDNDVIIEIGDEAVEEGEFRQVTVEDSTAYELFGRVGSECS.

Residues 9–125 form the MTTase N-terminal domain; that stretch reads PAIFLLSLGC…VLAAIGAHYC (117 aa). Residues C18, C54, C88, C149, C153, and C156 each contribute to the [4Fe-4S] cluster site. One can recognise a Radical SAM core domain in the interval 135–364; it reads LTPPHYAFLK…MELQESIAAS (230 aa). One can recognise a TRAM domain in the interval 367–434; the sequence is RKLEGQTLTV…AYELFGRVGS (68 aa).

The protein belongs to the methylthiotransferase family. RimO subfamily. Requires [4Fe-4S] cluster as cofactor.

It localises to the cytoplasm. The enzyme catalyses L-aspartate(89)-[ribosomal protein uS12]-hydrogen + (sulfur carrier)-SH + AH2 + 2 S-adenosyl-L-methionine = 3-methylsulfanyl-L-aspartate(89)-[ribosomal protein uS12]-hydrogen + (sulfur carrier)-H + 5'-deoxyadenosine + L-methionine + A + S-adenosyl-L-homocysteine + 2 H(+). In terms of biological role, catalyzes the methylthiolation of an aspartic acid residue of ribosomal protein uS12. The protein is Ribosomal protein uS12 methylthiotransferase RimO of Chlorobaculum parvum (strain DSM 263 / NCIMB 8327) (Chlorobium vibrioforme subsp. thiosulfatophilum).